The chain runs to 600 residues: Methionine--tRNA ligase (600 aa).

Residues Pro11 to His21 carry the 'HIGH' region motif. Cys143, Cys146, Cys156, and Cys159 together coordinate Zn(2+). Positions Gln350–Ser354 match the 'KMSKS' region motif. Residue Ser353 coordinates ATP.

This sequence belongs to the class-I aminoacyl-tRNA synthetase family. MetG type 1 subfamily. Monomer. The cofactor is Zn(2+).

It localises to the cytoplasm. It carries out the reaction tRNA(Met) + L-methionine + ATP = L-methionyl-tRNA(Met) + AMP + diphosphate. In terms of biological role, is required not only for elongation of protein synthesis but also for the initiation of all mRNA translation through initiator tRNA(fMet) aminoacylation. The chain is Methionine--tRNA ligase from Kineococcus radiotolerans (strain ATCC BAA-149 / DSM 14245 / SRS30216).